Here is a 95-residue protein sequence, read N- to C-terminus: Large ribosomal subunit protein uL23 (95 aa).

This sequence belongs to the universal ribosomal protein uL23 family. In terms of assembly, part of the 50S ribosomal subunit. Contacts protein L29, and trigger factor when it is bound to the ribosome.

In terms of biological role, one of the early assembly proteins it binds 23S rRNA. One of the proteins that surrounds the polypeptide exit tunnel on the outside of the ribosome. Forms the main docking site for trigger factor binding to the ribosome. In Pelotomaculum thermopropionicum (strain DSM 13744 / JCM 10971 / SI), this protein is Large ribosomal subunit protein uL23.